The chain runs to 67 residues: Non-specific lipid-transfer protein 2P (67 aa).

Disulfide bonds link Cys-2–Cys-34, Cys-10–Cys-24, Cys-25–Cys-60, and Cys-36–Cys-67.

Functionally, transfer lipids across membranes. May play a role in plant defense or in the biosynthesis of cuticle layers. The polypeptide is Non-specific lipid-transfer protein 2P (Triticum aestivum (Wheat)).